Here is a 492-residue protein sequence, read N- to C-terminus: Probable malate:quinone oxidoreductase 1 (492 aa).

The protein belongs to the MQO family. The cofactor is FAD.

It carries out the reaction (S)-malate + a quinone = a quinol + oxaloacetate. The protein operates within carbohydrate metabolism; tricarboxylic acid cycle; oxaloacetate from (S)-malate (quinone route): step 1/1. The protein is Probable malate:quinone oxidoreductase 1 of Staphylococcus aureus (strain MRSA252).